We begin with the raw amino-acid sequence, 218 residues long: MVKSNLQRILNSHCFAREKEGKKQCESSIMEALSSSITDRMASPTVCCSSTTGPGPLWCSDAPHPPLKIPGGRGNGARDHPSTTQTLYSDRKLTVTEEPAGPGRPQILHFQSRPAAARLIQWEAVLRGDGLFVEIPCEPFPDGSKESFISLLEFAEEHLKVVSVFVCFYKNREDRVKLVRTFSFLGFEMVKPGHALVPARPDVLFMAYNFDRDSSDED.

Belongs to the ODC antizyme family. In terms of assembly, interacts with ODC1 and thereby sterically blocks ODC homodimerization. Expressed ubiquitously in 24 hours embryos, with highest levels in telencephalon, lens, retina, cerebellum and hindbrain primordia.

In terms of biological role, ornithine decarboxylase (ODC) antizyme protein that negatively regulates ODC activity and intracellular polyamine biosynthesis and uptake in response to increased intracellular polyamine levels. Binds to ODC monomers, inhibiting the assembly of the functional ODC homodimers. Does not target the ODC monomers for degradation, which allows a protein synthesis-independent restoration of ODC activity. The protein is Ornithine decarboxylase antizyme 2 (oaz1b) of Danio rerio (Zebrafish).